Consider the following 262-residue polypeptide: Ubiquitin thioesterase otubain-like (262 aa).

The OTU domain maps to Lys-64–Asn-262. Asp-72 is a catalytic residue. Cys-75 functions as the Nucleophile in the catalytic mechanism. Ile-168 contributes to the substrate binding site. The active site involves His-255.

This sequence belongs to the peptidase C65 family.

The enzyme catalyses Thiol-dependent hydrolysis of ester, thioester, amide, peptide and isopeptide bonds formed by the C-terminal Gly of ubiquitin (a 76-residue protein attached to proteins as an intracellular targeting signal).. Functionally, possible hydrolase that can remove conjugated ubiquitin from proteins in vitro and may therefore play an important regulatory role at the level of protein turnover by preventing degradation. In Drosophila melanogaster (Fruit fly), this protein is Ubiquitin thioesterase otubain-like.